Reading from the N-terminus, the 386-residue chain is Histidine decarboxylase (386 aa).

Position 120 (H120) interacts with substrate. The residue at position 233 (K233) is an N6-(pyridoxal phosphate)lysine.

The protein belongs to the group II decarboxylase family. As to quaternary structure, homotetramer. Requires pyridoxal 5'-phosphate as cofactor.

The catalysed reaction is L-histidine + H(+) = histamine + CO2. It participates in siderophore biosynthesis; anguibactin biosynthesis. This chain is Histidine decarboxylase, found in Vibrio anguillarum (strain ATCC 68554 / 775) (Listonella anguillarum).